The chain runs to 85 residues: Large ribosomal subunit protein bL27 (85 aa).

The tract at residues 1 to 22 (MAHKKAGGSTKNGRDSESKRLG) is disordered.

The protein belongs to the bacterial ribosomal protein bL27 family.

In Alteromonas mediterranea (strain DSM 17117 / CIP 110805 / LMG 28347 / Deep ecotype), this protein is Large ribosomal subunit protein bL27.